Reading from the N-terminus, the 452-residue chain is Type II methyltransferase M.EcaI (452 aa).

The protein belongs to the N(4)/N(6)-methyltransferase family.

The enzyme catalyses a 2'-deoxyadenosine in DNA + S-adenosyl-L-methionine = an N(6)-methyl-2'-deoxyadenosine in DNA + S-adenosyl-L-homocysteine + H(+). Functionally, a beta subtype methylase, recognizes the double-stranded sequence 5'-GGTNACC-3', methylates A-5 on both strands and protects the DNA from cleavage by the EcaI endonuclease. This is Type II methyltransferase M.EcaI (ecaIM) from Enterobacter cloacae.